A 423-amino-acid polypeptide reads, in one-letter code: COP9 signalosome complex subunit 3 (423 aa).

The residue at position 2 (alanine 2) is an N-acetylalanine. Positions 197 to 365 (NFERALYFYE…GMVSFHDNPE (169 aa)) constitute a PCI domain. A disordered region spans residues 402–423 (QFVQKSMGSQEDDSGNKPSSYS). 3 positions are modified to phosphoserine: serine 407, serine 410, and serine 423.

It belongs to the CSN3 family. As to quaternary structure, component of the CSN complex, composed of COPS1/GPS1, COPS2, COPS3, COPS4, COPS5, COPS6, COPS7 (COPS7A or COPS7B), COPS8 and COPS9 isoform 1. In the complex, it probably interacts directly with COPS1, COPS4, COPS8 and COPS9 isoform 1. Interacts with CK2 and PKD. Interacts with the translation initiation factor EIF3S6 and IKBKG. Interacts with ERCC6. In terms of tissue distribution, widely expressed. Expressed at high level in heart and skeletal muscle.

The protein resides in the cytoplasm. Its subcellular location is the nucleus. In terms of biological role, component of the COP9 signalosome complex (CSN), a complex involved in various cellular and developmental processes. The CSN complex is an essential regulator of the ubiquitin (Ubl) conjugation pathway by mediating the deneddylation of the cullin subunits of SCF-type E3 ligase complexes, leading to decrease the Ubl ligase activity of SCF-type complexes such as SCF, CSA or DDB2. The complex is also involved in phosphorylation of p53/TP53, c-jun/JUN, IkappaBalpha/NFKBIA, ITPK1 and IRF8/ICSBP, possibly via its association with CK2 and PKD kinases. CSN-dependent phosphorylation of TP53 and JUN promotes and protects degradation by the Ubl system, respectively. The sequence is that of COP9 signalosome complex subunit 3 (COPS3) from Homo sapiens (Human).